Consider the following 1150-residue polypeptide: PAN2-PAN3 deadenylation complex catalytic subunit pan2 (1150 aa).

2 WD repeats span residues 96–139 (AHEE…DKLH) and 270–309 (ANVS…HFNE). The interval 310–446 (MSKEAEFGDV…GAKINGETDD (137 aa)) is linker. The USP domain maps to 447–816 (DPLLKYSNVE…IPCVLAYQVQ (370 aa)). Positions 865–1043 (VALDTEFVDL…IEDARMALRL (179 aa)) constitute an Exonuclease domain. Residues Asp-868, Glu-870, Asp-977, and Asp-1036 each contribute to the a divalent metal cation site. Residues 1074-1150 (PPPRNGVPTV…GDFFSGSPLK (77 aa)) form a disordered region. Residues 1091-1106 (VTMQNNSGRNTPSTSD) show a composition bias toward polar residues. The span at 1108 to 1120 (AGAAASAPATPRQ) shows a compositional bias: low complexity.

Belongs to the peptidase C19 family. PAN2 subfamily. As to quaternary structure, forms a heterotrimer with an asymmetric homodimer of the regulatory subunit pan3 to form the poly(A)-nuclease (PAN) deadenylation complex. Requires a divalent metal cation as cofactor.

It is found in the cytoplasm. It catalyses the reaction Exonucleolytic cleavage of poly(A) to 5'-AMP.. Its activity is regulated as follows. Positively regulated by the regulatory subunit pan3. Its function is as follows. Catalytic subunit of the poly(A)-nuclease (PAN) deadenylation complex, one of two cytoplasmic mRNA deadenylases involved in mRNA turnover. PAN specifically shortens poly(A) tails of RNA and the activity is stimulated by poly(A)-binding protein pab1. PAN deadenylation is followed by rapid degradation of the shortened mRNA tails by the CCR4-NOT complex. Deadenylated mRNAs are then degraded by two alternative mechanisms, namely exosome-mediated 3'-5' exonucleolytic degradation, or deadenylation-dependent mRNA decaping and subsequent 5'-3' exonucleolytic degradation by xrn1. May also be involved in post-transcriptional maturation of mRNA poly(A) tails. The protein is PAN2-PAN3 deadenylation complex catalytic subunit pan2 of Aspergillus niger (strain ATCC MYA-4892 / CBS 513.88 / FGSC A1513).